The chain runs to 100 residues: UPF0235 protein NE0395 (100 aa).

It belongs to the UPF0235 family.

In Nitrosomonas europaea (strain ATCC 19718 / CIP 103999 / KCTC 2705 / NBRC 14298), this protein is UPF0235 protein NE0395.